A 354-amino-acid polypeptide reads, in one-letter code: MTCRRITFVPNFMIRDARVLRAGFVPREVEHRDAEVNHLSSVLEPITNGEPADTAIVTGPSGTGKTCISQFVTERLREEVLNVEATYVNCWRNYTRFRTLYQILDDFGETIDIHRQSTPHDELIDRLQQYDGPRTVIILDEVDQLEDPGIIYDLHSLPHFAVICIANKEEDLFSRVDDRLVSRLRSSEHVRMDKYHDEQLHDILAARVKGGLDQDVITTNQLDRIADAAAGDARLAIGILRTAASKADRESRERITDDILLNAAEDARAQIKQKNLDSLIPHQRLVYDVVREHGPLGPSEIYDHYKRKVDDPRTKRTIRTYLSKMTQYNVLEAEGTSRDREYSLVDSTAPSVTQ.

ATP-binding positions include T63–C67, Y195, and R207.

It belongs to the CDC6/cdc18 family.

Involved in regulation of DNA replication. This Halobacterium salinarum (strain ATCC 700922 / JCM 11081 / NRC-1) (Halobacterium halobium) protein is ORC1-type DNA replication protein 9 (orc9-1).